The chain runs to 63 residues: Bowman-Birk type proteinase inhibitor (63 aa).

7 cysteine pairs are disulfide-bonded: cysteine 7–cysteine 60, cysteine 8–cysteine 23, cysteine 11–cysteine 56, cysteine 13–cysteine 21, cysteine 30–cysteine 37, cysteine 34–cysteine 49, and cysteine 39–cysteine 47.

Monomer.

In terms of biological role, inhibits trypsin stoichiometrically at the molar ratio of 1:2, with a dissociation constant of 4.2 nM. Does not inhibit chymotrypsin. In Lupinus albus (White lupine), this protein is Bowman-Birk type proteinase inhibitor.